The primary structure comprises 644 residues: Exoribonuclease 2 (644 aa).

One can recognise an RNB domain in the interval 189–516; the sequence is REDLTALDFV…NHRLLKAVIK (328 aa). An S1 motif domain is found at 561–643; sequence DTRFAAEIVD…ETRSIIARPV (83 aa).

The protein belongs to the RNR ribonuclease family. RNase II subfamily.

The protein resides in the cytoplasm. The enzyme catalyses Exonucleolytic cleavage in the 3'- to 5'-direction to yield nucleoside 5'-phosphates.. In terms of biological role, involved in mRNA degradation. Hydrolyzes single-stranded polyribonucleotides processively in the 3' to 5' direction. The chain is Exoribonuclease 2 from Escherichia coli O17:K52:H18 (strain UMN026 / ExPEC).